We begin with the raw amino-acid sequence, 473 residues long: 3-isopropylmalate dehydratase large subunit (473 aa).

3 residues coordinate [4Fe-4S] cluster: Cys-354, Cys-414, and Cys-417. Residues 425-448 form a disordered region; it reads LAPGQRSASTSNRNFEGRQGRGGR.

This sequence belongs to the aconitase/IPM isomerase family. LeuC type 1 subfamily. As to quaternary structure, heterodimer of LeuC and LeuD. [4Fe-4S] cluster serves as cofactor.

The catalysed reaction is (2R,3S)-3-isopropylmalate = (2S)-2-isopropylmalate. Its pathway is amino-acid biosynthesis; L-leucine biosynthesis; L-leucine from 3-methyl-2-oxobutanoate: step 2/4. Functionally, catalyzes the isomerization between 2-isopropylmalate and 3-isopropylmalate, via the formation of 2-isopropylmaleate. In Acidothermus cellulolyticus (strain ATCC 43068 / DSM 8971 / 11B), this protein is 3-isopropylmalate dehydratase large subunit.